Consider the following 389-residue polypeptide: S-adenosylmethionine synthase (389 aa).

His-15 is a binding site for ATP. Mg(2+) is bound at residue Asp-17. Residue Glu-43 participates in K(+) binding. The L-methionine site is built by Glu-56 and Gln-99. The flexible loop stretch occupies residues 99-109; that stretch reads QSPDIAQGVNE. ATP-binding positions include 166–168, 234–235, Asp-243, 249–250, Ala-266, and Lys-270; these read DAK, RF, and RK. Asp-243 serves as a coordination point for L-methionine. Lys-274 is a binding site for L-methionine.

Belongs to the AdoMet synthase family. As to quaternary structure, homotetramer; dimer of dimers. Mg(2+) serves as cofactor. Requires K(+) as cofactor.

It is found in the cytoplasm. It catalyses the reaction L-methionine + ATP + H2O = S-adenosyl-L-methionine + phosphate + diphosphate. It functions in the pathway amino-acid biosynthesis; S-adenosyl-L-methionine biosynthesis; S-adenosyl-L-methionine from L-methionine: step 1/1. Functionally, catalyzes the formation of S-adenosylmethionine (AdoMet) from methionine and ATP. The overall synthetic reaction is composed of two sequential steps, AdoMet formation and the subsequent tripolyphosphate hydrolysis which occurs prior to release of AdoMet from the enzyme. The protein is S-adenosylmethionine synthase of Neisseria meningitidis serogroup B (strain ATCC BAA-335 / MC58).